A 403-amino-acid chain; its full sequence is 26S proteasome regulatory subunit 6B homolog (403 aa).

Met1 is subject to N-acetylmethionine. 191–198 (GPPGTGKT) is a binding site for ATP.

The protein belongs to the AAA ATPase family.

It is found in the cytoplasm. The protein resides in the nucleus. The 26S proteasome is involved in the ATP-dependent degradation of ubiquitinated proteins. The regulatory (or ATPase) complex confers ATP dependency and substrate specificity to the 26S complex. In Dictyostelium discoideum (Social amoeba), this protein is 26S proteasome regulatory subunit 6B homolog (psmC4).